Consider the following 242-residue polypeptide: Probable septum site-determining protein MinC (242 aa).

A compositionally biased stretch (basic and acidic residues) spans 120–135 (APKKVEEKPAEPEHKP). Residues 120–144 (APKKVEEKPAEPEHKPSRIVTSPVR) form a disordered region.

The protein belongs to the MinC family. As to quaternary structure, interacts with MinD and FtsZ.

Its function is as follows. Cell division inhibitor that blocks the formation of polar Z ring septums. Rapidly oscillates between the poles of the cell to destabilize FtsZ filaments that have formed before they mature into polar Z rings. Prevents FtsZ polymerization. The protein is Probable septum site-determining protein MinC of Ectopseudomonas mendocina (strain ymp) (Pseudomonas mendocina).